The chain runs to 405 residues: Arginine deiminase (405 aa).

Cysteine 395 serves as the catalytic Amidino-cysteine intermediate.

Belongs to the arginine deiminase family.

The protein localises to the cytoplasm. It catalyses the reaction L-arginine + H2O = L-citrulline + NH4(+). Its pathway is amino-acid degradation; L-arginine degradation via ADI pathway; carbamoyl phosphate from L-arginine: step 1/2. This chain is Arginine deiminase, found in Rhodococcus opacus (strain B4).